Consider the following 409-residue polypeptide: Na(+)-translocating NADH-quinone reductase subunit F (409 aa).

Residues 5 to 25 (FIFGIIAFTALVLVLAVIILF) form a helical membrane-spanning segment. The 2Fe-2S ferredoxin-type domain occupies 34-128 (GDITISINND…SMDVELPEEI (95 aa)). 4 residues coordinate [2Fe-2S] cluster: cysteine 71, cysteine 77, cysteine 80, and cysteine 112. In terms of domain architecture, FAD-binding FR-type spans 131 to 271 (VKKWECTVIS…SGPFGEFFAK (141 aa)).

It belongs to the NqrF family. As to quaternary structure, composed of six subunits; NqrA, NqrB, NqrC, NqrD, NqrE and NqrF. Requires [2Fe-2S] cluster as cofactor. FAD is required as a cofactor.

The protein localises to the cell inner membrane. The catalysed reaction is a ubiquinone + n Na(+)(in) + NADH + H(+) = a ubiquinol + n Na(+)(out) + NAD(+). Functionally, NQR complex catalyzes the reduction of ubiquinone-1 to ubiquinol by two successive reactions, coupled with the transport of Na(+) ions from the cytoplasm to the periplasm. The first step is catalyzed by NqrF, which accepts electrons from NADH and reduces ubiquinone-1 to ubisemiquinone by a one-electron transfer pathway. The chain is Na(+)-translocating NADH-quinone reductase subunit F from Actinobacillus pleuropneumoniae serotype 5b (strain L20).